An 816-amino-acid polypeptide reads, in one-letter code: Transducer protein Htr18 (816 aa).

A run of 2 helical transmembrane segments spans residues 21–41 (VVIV…TQAV) and 282–302 (NIVV…LVIG). Positions 303–356 (RDALTALTDMSDRAEAIAAGDIDTAIEETTRIDEVGDLRRSFRDIQEYLQTVAG) constitute an HAMP 1 domain. Residues 399-425 (DAQETAEQSRKEAEQSREEAEALAAAL) form a disordered region. A compositionally biased stretch (basic and acidic residues) spans 405–418 (EQSRKEAEQSREEA). Residues 423–476 (AALESQAQDIRETVEHAADGDLTQRLETDTDHESMAAIATALNSLLEELEGTIH) form the HAMP 2 domain. Residues 495 to 731 (SAEEVKRASG…EVVTMVDEVG (237 aa)) enclose the Methyl-accepting transducer domain. Residues 790–816 (GGAENTTGAFVRSASTDHSRDATHHDT) are disordered. Positions 793 to 803 (ENTTGAFVRSA) are enriched in polar residues. The span at 804-816 (STDHSRDATHHDT) shows a compositional bias: basic and acidic residues.

Belongs to the methyl-accepting chemotaxis (MCP) protein family. Methylated by CheR.

It localises to the cell membrane. Functionally, potentially involved in chemo- or phototactic signal transduction. This is Transducer protein Htr18 (htr18) from Halobacterium salinarum (strain ATCC 29341 / DSM 671 / R1).